An 884-amino-acid chain; its full sequence is Protein translocase subunit SecA (884 aa).

ATP is bound by residues Q82, 100-104, and D491; that span reads GEGKT.

This sequence belongs to the SecA family.

It localises to the plastid. It is found in the chloroplast stroma. The protein resides in the chloroplast thylakoid membrane. It carries out the reaction ATP + H2O + cellular proteinSide 1 = ADP + phosphate + cellular proteinSide 2.. Functionally, has a central role in coupling the hydrolysis of ATP to the transfer of proteins across the thylakoid membrane. The polypeptide is Protein translocase subunit SecA (Olisthodiscus luteus (Marine phytoflagellate)).